We begin with the raw amino-acid sequence, 467 residues long: Trigger factor (467 aa).

Residues 162–243 (GDFVSIDLSA…LNSVKERHLP (82 aa)) form the PPIase FKBP-type domain. A compositionally biased stretch (acidic residues) spans 426–435 (EEGNELDLDE). Residues 426–467 (EEGNELDLDELFGTQAGEEQGEQAEGTEATDEQSAKADAKAE) are disordered. Residues 436-452 (LFGTQAGEEQGEQAEGT) show a composition bias toward low complexity. A compositionally biased stretch (basic and acidic residues) spans 458–467 (QSAKADAKAE).

This sequence belongs to the FKBP-type PPIase family. Tig subfamily.

The protein localises to the cytoplasm. It carries out the reaction [protein]-peptidylproline (omega=180) = [protein]-peptidylproline (omega=0). Involved in protein export. Acts as a chaperone by maintaining the newly synthesized protein in an open conformation. Functions as a peptidyl-prolyl cis-trans isomerase. This Saccharopolyspora erythraea (strain ATCC 11635 / DSM 40517 / JCM 4748 / NBRC 13426 / NCIMB 8594 / NRRL 2338) protein is Trigger factor.